A 417-amino-acid polypeptide reads, in one-letter code: Serine hydroxymethyltransferase (417 aa).

Residues L122 and 126–128 (GHL) each bind (6S)-5,6,7,8-tetrahydrofolate. Position 230 is an N6-(pyridoxal phosphate)lysine (K230). 355 to 357 (SPF) contacts (6S)-5,6,7,8-tetrahydrofolate.

It belongs to the SHMT family. As to quaternary structure, homodimer. The cofactor is pyridoxal 5'-phosphate.

Its subcellular location is the cytoplasm. The enzyme catalyses (6R)-5,10-methylene-5,6,7,8-tetrahydrofolate + glycine + H2O = (6S)-5,6,7,8-tetrahydrofolate + L-serine. It participates in one-carbon metabolism; tetrahydrofolate interconversion. Its pathway is amino-acid biosynthesis; glycine biosynthesis; glycine from L-serine: step 1/1. Functionally, catalyzes the reversible interconversion of serine and glycine with tetrahydrofolate (THF) serving as the one-carbon carrier. This reaction serves as the major source of one-carbon groups required for the biosynthesis of purines, thymidylate, methionine, and other important biomolecules. Also exhibits THF-independent aldolase activity toward beta-hydroxyamino acids, producing glycine and aldehydes, via a retro-aldol mechanism. The sequence is that of Serine hydroxymethyltransferase from Francisella tularensis subsp. novicida (strain U112).